A 791-amino-acid chain; its full sequence is IQ motif and ubiquitin-like domain-containing protein (791 aa).

The disordered stretch occupies residues 1–73; sequence MSNQQEKYEA…SDQSFSSLEP (73 aa). Residues 131–207 enclose the Ubiquitin-like domain; sequence ATVKVVLIPV…VQVEIFSTNP (77 aa). An IQ domain is found at 338–367; sequence RLKAVIVIQTYYRQWHAKIFVENLRRQKSL.

Component of the axonemal radial spoke 1 (RS1) complex, at least composed of spoke head proteins RSPH1, RSPH3, RSPH9 and the cilia-specific component RSPH4A or sperm-specific component RSPH6A, spoke stalk proteins RSPH14, DNAJB13, DYDC1, ROPN1L and NME5, and the anchor protein IQUB. Does not appear to be part of radial spoke complexes 2 or 3 (RS2 or RS3). Interacts with CALM1. Interacts with DNAJB13. Interacts with DYNLL2. Interacts with NME5. Interacts with RSPH3. Interacts with RSPH9. Interacts with ZMYND10. Interacts with calmodulin; the interaction occurs in conditions of low but not high calcium.

It is found in the cytoplasm. The protein localises to the cytoskeleton. Its subcellular location is the flagellum axoneme. The protein resides in the cell projection. It localises to the cilium. Its function is as follows. Adapter protein that anchors the radial spoke 1 (RS1) complex to the A microtubule of outer doublet microtubules in axonemes. The triple radial spokes (RS1, RS2 and RS3) are required to modulate beating of the sperm flagellum. May play a role in inhibiting signaling via MAPK1/ERK2 and MAPK3/ERK1. Additionally, may play a role in the functioning of cilia. Not required for the functioning of tracheal or ependymal cilia. This is IQ motif and ubiquitin-like domain-containing protein (IQUB) from Homo sapiens (Human).